The primary structure comprises 256 residues: Indole-3-glycerol phosphate synthase (256 aa).

This sequence belongs to the TrpC family.

The catalysed reaction is 1-(2-carboxyphenylamino)-1-deoxy-D-ribulose 5-phosphate + H(+) = (1S,2R)-1-C-(indol-3-yl)glycerol 3-phosphate + CO2 + H2O. Its pathway is amino-acid biosynthesis; L-tryptophan biosynthesis; L-tryptophan from chorismate: step 4/5. This is Indole-3-glycerol phosphate synthase from Caldanaerobacter subterraneus subsp. tengcongensis (strain DSM 15242 / JCM 11007 / NBRC 100824 / MB4) (Thermoanaerobacter tengcongensis).